The primary structure comprises 1989 residues: MATADTPAPASSGLSPKEEGELEDGEISDDDNNSQIRSRSSSSSSGGGLLPYPRRRPPHSARGGGSGGGGGSSSSSSSSQQQLRNFSRSRHASERGHLRGPSSYRPKEPFRSHPPSVRMPSSSLSESSPRPSFWERSHLALDRFRFRGRPYRGGSRWSRGRGVGERGGKPGCRPPLGGGAGSGFSSSQSWREPSPPRKSSKSFGRSPSRKQNYSSKNENCVEETFEDLLLKYKQIQLELECINKDEKLALSSKEENVQEDPKTLNFEDQTSTDNVSITKDSSKEVAPEEKTQVKTFQAFELKPLRQKLTLPGDKNRLKKVKDGAKPLSLKSDTTDSSQGLQDKEQNLTRRISTSDILSEKKLGEDEEELSELQLRLLALQSASKKWQQKEQQVMKESKEKLTKTKTVQQKVKTSTKTHSAKKVSTTAKQALRKQQTKAWKKLQQQKEQERQKEEDQRKQAEEEERRKREEEIRKIRDLSNQEEQYNRFMKLVGGKRRSRSKSSDPDLRRSLDKQPTDSGGGIYQYDNYEEVAMDTDSETSSPAPSPVQPPFFSECSLGYFSPAPSLSLPPPPQVSSLPPLSQPYVEGLCVSLEPLPPLPPLPPLPPEDPEQPPKPPFADEEEEEEMLLREELLKSLANKRAFKPEETSSNSDPPSPPVLNNSHPVPRSNLSIVSINTVSQPRIQNPKFHRGPRLPRTVISLPKHKSVVVTLNDSDDSESDGEASKSTNSVFGGLESMIKEARRTAEQASKPKVPPKSEKENDPLRTPEALPEEKKIEYRLLKEEIANREKQRLIKSDQLKTSSSSPANSDVEIDGIGRIAMVTKQVTDAESKLKKHRILLMKDESVLKNLVQQEAKKKESVRNAEAKITKLTEQLQATEKILNVNRMFLKKLQEQIHRVQQRVTIKKALTLKYGEELARAKAVASKEIGKRKLEQDRFGPNKMMRLDSSPVSSPRKHSAELIAMEKRRLQKLEYEYALKIQKLKEARALKAKEQQNISPVVEEEPEFSLPQPSLHDLTQDKLTLDTEENDVDDEILSGSSRERRRSFLESNYFTKPNLKHTDTANKECINKLNKNTVEKPELFLGLKIGELQKLYSKADSLKQLILKTTTGITEKVLHGQEISVDVDFVTAQSKTMEVKPCPFRPYHSPLLVFKSYRFSPYYRTKEKLPLSSVSYSNMIEPDQCFCRFDLTGTCNDDDCQWQHIQDYTLSRKQLFQDILSYNLSLIGCAETSTNEEITASAEKYVEKLFGVNKDRMSMDQMAVLLVSNINESKGHTPPFTTYKDKRKWKPKFWRKPISDNSFSSDEEQSTGPIKYAFQPENQINVPALDTVVTPDDVRYFTNETDDIANLEASVLENPSHVQLWLKLAYKYLNQNEGECSESLDSALNVLARALENNKDNPEIWCHYLRLFSKRGTKDEVQEMCETAVEYAPDYQSFWTFLHLESTFEEKDYVCERMLEFLMGAAKQETSNILSFQLLEALLFRVQLHIFTGRCQSALAILQNALKSANDGIVAEYLKTSDRCLAWLAYIHLIEFNILPSKFYDPSNDNPSRIVNTESFVMPWQAVQDVKTNPDMLLAVFEDAVKACTDESLAVEERIEACLPLYTNMIALHQLLERYEAAMELCKSLLESCPINCQLLEALVALYLQTNQHDKARAVWLTAFEKNPQNAEVFYHMCKFFILQNRGDNLLPFLRKFIASFFKPGFEKYNNLDLFRYLLNIPGPIDIPSRLCKGNFDDDMFNHQVPYLWLIYCLCHPLQSSIKETVEAYEAALGVAMRCDIVQKIWMDYLVFANNRAAGSRNKVQEFKFFTDLVNRCLVTVPARYPIPFSSADYWSNYEFHNRVIFFYLSCVPKTQHSKTLERFCSVMPANSGLALRLLQHEWEESNVQILKLQAKMFTYNIPTCLATWKIAIAAEIVLKGQREVHRLYQRALQKLPLCASLWKDQLLFEASEGGKTDNLRKLVSKCQEIGVSLNELLNLNSNKTESKNH.

Disordered stretches follow at residues 1–133 (MATA…RPSF), 148–218 (GRPY…SKNE), 251–290 (SSKEENVQEDPKTLNFEDQTSTDNVSITKDSSKEVAPEEK), and 310–365 (LPGD…LGED). Alanine 2 is subject to N-acetylalanine. 3 positions are modified to phosphoserine: serine 15, serine 28, and serine 34. Residues 20–32 (GELEDGEISDDDN) show a composition bias toward acidic residues. Low complexity predominate over residues 33-44 (NSQIRSRSSSSS). Gly residues predominate over residues 62–72 (RGGGSGGGGGS). Composition is skewed to low complexity over residues 114–132 (PPSVRMPSSSLSESSPRPS), 183–192 (GFSSSQSWRE), and 201–210 (KSFGRSPSRK). Position 128 is a phosphoserine (serine 128). Residues 219 to 259 (NCVEETFEDLLLKYKQIQLELECINKDEKLALSSKEENVQE) are a coiled coil. The residue at position 251 (serine 251) is a Phosphoserine. A compositionally biased stretch (basic and acidic residues) spans 251 to 262 (SSKEENVQEDPK). Positions 266–279 (FEDQTSTDNVSITK) are enriched in polar residues. The span at 280 to 290 (DSSKEVAPEEK) shows a compositional bias: basic and acidic residues. Residues 330 to 340 (KSDTTDSSQGL) are compositionally biased toward polar residues. 2 positions are modified to phosphoserine: serine 352 and serine 383. The stretch at 358–389 (SEKKLGEDEEELSELQLRLLALQSASKKWQQK) forms a coiled coil. 2 disordered regions span residues 385 to 671 (KWQQ…SNLS) and 711 to 770 (LNDS…PEAL). Residues 392-402 (QVMKESKEKLT) are compositionally biased toward basic and acidic residues. Over residues 430–440 (ALRKQQTKAWK) the composition is skewed to basic residues. The stretch at 432-487 (RKQQTKAWKKLQQQKEQERQKEEDQRKQAEEEERRKREEEIRKIRDLSNQEEQYNR) forms a coiled coil. 2 stretches are compositionally biased toward basic and acidic residues: residues 444–479 (QQKEQERQKEEDQRKQAEEEERRKREEEIRKIRDLS) and 501–515 (KSSDPDLRRSLDKQP). A compositionally biased stretch (acidic residues) spans 527 to 537 (NYEEVAMDTDS). Low complexity predominate over residues 574–583 (VSSLPPLSQP). A compositionally biased stretch (pro residues) spans 594-616 (PLPPLPPLPPLPPEDPEQPPKPP). Over residues 647-671 (TSSNSDPPSPPVLNNSHPVPRSNLS) the composition is skewed to polar residues. Residues serine 662, serine 714, serine 717, and serine 719 each carry the phosphoserine modification. Residues 755 to 770 (PKSEKENDPLRTPEAL) show a composition bias toward basic and acidic residues. Phosphothreonine is present on threonine 766. Phosphoserine occurs at positions 805 and 809. Residues 847-909 (LKNLVQQEAK…QQRVTIKKAL (63 aa)) adopt a coiled-coil conformation. Phosphoserine is present on residues serine 948, serine 949, and serine 953. A coiled-coil region spans residues 965-989 (EKRRLQKLEYEYALKIQKLKEARAL). Residues serine 998 and serine 1046 each carry the phosphoserine modification. A C3H1-type zinc finger spans residues 1185–1206 (FCRFDLTGTCNDDDCQWQHIQD). Phosphoserine occurs at positions 1301, 1303, and 1304. TPR repeat units lie at residues 1361 to 1400 (VQLWLKLAYKYLNQNEGECSESLDSALNVLARALENNKDN), 1401 to 1434 (PEIWCHYLRLFSKRGTKDEVQEMCETAVEYAPDY), 1438 to 1471 (WTFLHLESTFEEKDYVCERMLEFLMGAAKQETSN), 1478 to 1511 (LEALLFRVQLHIFTGRCQSALAILQNALKSANDG), 1602 to 1635 (LPLYTNMIALHQLLERYEAAMELCKSLLESCPIN), 1636 to 1669 (CQLLEALVALYLQTNQHDKARAVWLTAFEKNPQN), and 1745 to 1778 (PYLWLIYCLCHPLQSSIKETVEAYEAALGVAMRC).

In terms of assembly, component of the poly(A) tail exosome targeting (PAXT) complex made of accessory factors, such as PABPN1, ZFC3H1 and MTREX, and which directs a subset of long and polyadenylated poly(A) RNAs for exosomal degradation. Co-localizes with component of the CBC-ARS2 (CBCA) complex. Binds to RNA exosome components. Interacts with NCBP1/CBP80, ZC3H18, MTREX and PABPN1 in a RNase-insensitive manner, and with PABPC4, PABPC1 and ZC3H14 in a RNase-sensitive manner.

It localises to the nucleus. In terms of biological role, subunit of the trimeric poly(A) tail exosome targeting (PAXT) complex, a complex that directs a subset of long and polyadenylated poly(A) RNAs for exosomal degradation. The RNA exosome is fundamental for the degradation of RNA in eukaryotic nuclei. Substrate targeting is facilitated by its cofactor MTREX, which links to RNA-binding protein adapters. This is Zinc finger C3H1 domain-containing protein (ZFC3H1) from Homo sapiens (Human).